A 187-amino-acid polypeptide reads, in one-letter code: Segregation and condensation protein B (187 aa).

It belongs to the ScpB family. In terms of assembly, homodimer. Homodimerization may be required to stabilize the binding of ScpA to the Smc head domains. Component of a cohesin-like complex composed of ScpA, ScpB and the Smc homodimer, in which ScpA and ScpB bind to the head domain of Smc. The presence of the three proteins is required for the association of the complex with DNA.

The protein localises to the cytoplasm. In terms of biological role, participates in chromosomal partition during cell division. May act via the formation of a condensin-like complex containing Smc and ScpA that pull DNA away from mid-cell into both cell halves. This chain is Segregation and condensation protein B, found in Agathobacter rectalis (strain ATCC 33656 / DSM 3377 / JCM 17463 / KCTC 5835 / VPI 0990) (Eubacterium rectale).